A 396-amino-acid chain; its full sequence is Acetylornithine aminotransferase 2 (396 aa).

Pyridoxal 5'-phosphate is bound by residues 102 to 103 (GA) and Phe134. Arg137 contributes to the N(2)-acetyl-L-ornithine binding site. 219–222 (DEVQ) contacts pyridoxal 5'-phosphate. Lys248 carries the N6-(pyridoxal phosphate)lysine modification. A pyridoxal 5'-phosphate-binding site is contributed by Thr276.

This sequence belongs to the class-III pyridoxal-phosphate-dependent aminotransferase family. ArgD subfamily. In terms of assembly, homodimer. Requires pyridoxal 5'-phosphate as cofactor.

It is found in the cytoplasm. The enzyme catalyses N(2)-acetyl-L-ornithine + 2-oxoglutarate = N-acetyl-L-glutamate 5-semialdehyde + L-glutamate. It functions in the pathway amino-acid biosynthesis; L-arginine biosynthesis; N(2)-acetyl-L-ornithine from L-glutamate: step 4/4. The sequence is that of Acetylornithine aminotransferase 2 from Bordetella parapertussis (strain 12822 / ATCC BAA-587 / NCTC 13253).